The primary structure comprises 587 residues: Urease subunit alpha (587 aa).

Residues 134–572 (GGIDTHVHFI…LPLAQRYLYT (439 aa)) form the Urease domain. Positions 139, 141, and 222 each coordinate Ni(2+). The residue at position 222 (K222) is an N6-carboxylysine. Residue H224 participates in substrate binding. The Ni(2+) site is built by H251 and H277. Residue H325 is the Proton donor of the active site. D365 lines the Ni(2+) pocket.

It belongs to the metallo-dependent hydrolases superfamily. Urease alpha subunit family. As to quaternary structure, heterotrimer of UreA (gamma), UreB (beta) and UreC (alpha) subunits. Three heterotrimers associate to form the active enzyme. Ni cation serves as cofactor. Carboxylation allows a single lysine to coordinate two nickel ions.

The protein localises to the cytoplasm. It catalyses the reaction urea + 2 H2O + H(+) = hydrogencarbonate + 2 NH4(+). It participates in nitrogen metabolism; urea degradation; CO(2) and NH(3) from urea (urease route): step 1/1. This is Urease subunit alpha from Clostridium perfringens.